Consider the following 141-residue polypeptide: Relaxin-3 (141 aa).

The first 24 residues, M1 to A24, serve as a signal peptide directing secretion. Disulfide bonds link C34-C128, C46-C141, and C127-C132. The propeptide at A54–R117 is connecting peptide.

Belongs to the insulin family. In terms of assembly, heterodimer of a B chain and an A chain linked by two disulfide bonds. In terms of tissue distribution, high expression in the brain localized to the pons/medulla with highest levels in pars ventromedialis of the dorsal tegmental nucleus. Significant expression is also detected in the spleen, thymus, lung, testis and ovary.

It is found in the secreted. In terms of biological role, may play a role in neuropeptide signaling processes. Ligand for LGR7, relaxin-3 receptor-1 and relaxin-3 receptor-2. The polypeptide is Relaxin-3 (Rln3) (Mus musculus (Mouse)).